A 445-amino-acid chain; its full sequence is 3-phosphoshikimate 1-carboxyvinyltransferase (445 aa).

The interval 1 to 25 (MSGHGPAQPMTARRSGPLKGRAEIP) is disordered. 3-phosphoshikimate-binding residues include lysine 28, serine 29, and arginine 33. Residue lysine 28 participates in phosphoenolpyruvate binding. Positions 101 and 129 each coordinate phosphoenolpyruvate. Serine 174, glutamine 176, aspartate 326, and lysine 353 together coordinate 3-phosphoshikimate. Phosphoenolpyruvate is bound at residue glutamine 176. The Proton acceptor role is filled by aspartate 326. Residues arginine 357 and arginine 400 each coordinate phosphoenolpyruvate.

The protein belongs to the EPSP synthase family. As to quaternary structure, monomer.

It localises to the cytoplasm. The catalysed reaction is 3-phosphoshikimate + phosphoenolpyruvate = 5-O-(1-carboxyvinyl)-3-phosphoshikimate + phosphate. It functions in the pathway metabolic intermediate biosynthesis; chorismate biosynthesis; chorismate from D-erythrose 4-phosphate and phosphoenolpyruvate: step 6/7. Catalyzes the transfer of the enolpyruvyl moiety of phosphoenolpyruvate (PEP) to the 5-hydroxyl of shikimate-3-phosphate (S3P) to produce enolpyruvyl shikimate-3-phosphate and inorganic phosphate. This is 3-phosphoshikimate 1-carboxyvinyltransferase from Cereibacter sphaeroides (strain ATCC 17029 / ATH 2.4.9) (Rhodobacter sphaeroides).